A 340-amino-acid polypeptide reads, in one-letter code: Ferrochelatase (340 aa).

Fe cation is bound by residues histidine 189 and glutamate 292.

It belongs to the ferrochelatase family.

It localises to the cytoplasm. The enzyme catalyses heme b + 2 H(+) = protoporphyrin IX + Fe(2+). It participates in porphyrin-containing compound metabolism; protoheme biosynthesis; protoheme from protoporphyrin-IX: step 1/1. In terms of biological role, catalyzes the ferrous insertion into protoporphyrin IX. The protein is Ferrochelatase of Pseudomonas aeruginosa (strain LESB58).